The primary structure comprises 165 residues: Ribosome maturation factor RimM (165 aa).

The PRC barrel domain occupies 94 to 165 (EDEFYIADLN…YVILNYQTKV (72 aa)).

Belongs to the RimM family. Binds ribosomal protein uS19.

The protein resides in the cytoplasm. Functionally, an accessory protein needed during the final step in the assembly of 30S ribosomal subunit, possibly for assembly of the head region. Essential for efficient processing of 16S rRNA. May be needed both before and after RbfA during the maturation of 16S rRNA. It has affinity for free ribosomal 30S subunits but not for 70S ribosomes. The sequence is that of Ribosome maturation factor RimM from Rickettsia prowazekii (strain Madrid E).